The primary structure comprises 86 residues: Beta-toxin Tz1 (86 aa).

An N-terminal signal peptide occupies residues 1-20 (MTRFVLFICCFFLIGMVVEC). Residues 21–83 (KDGYLVGNDG…TWDRATNRCG (63 aa)) form the LCN-type CS-alpha/beta domain. Intrachain disulfides connect Cys31–Cys82, Cys35–Cys57, Cys43–Cys63, and Cys47–Cys65. Arg84 carries the arginine amide modification.

Belongs to the long (4 C-C) scorpion toxin superfamily. Sodium channel inhibitor family. Beta subfamily. In terms of tissue distribution, expressed by the venom gland.

It is found in the secreted. In terms of biological role, beta toxins bind voltage-independently at site-4 of sodium channels (Nav) and shift the voltage of activation toward more negative potentials thereby affecting sodium channel activation and promoting spontaneous and repetitive firing. Strongly affects skeletal muscle channels Nav1.4/SCN4A, poorly affects the neuronal channels Nav1.6/SCN8A and Nav1.2/SCN2A. Induces spastic paralysis of rear limbs, increased salivation, apnea, tachycardia and increased perspiration. In Tityus zulianus (Venezuelan scorpion), this protein is Beta-toxin Tz1.